The following is a 342-amino-acid chain: P2Y purinoceptor 12 (342 aa).

Over 1 to 27 the chain is Extracellular; that stretch reads MQAIDNLTSAPGNTSLCTRDYKITQVL. N-linked (GlcNAc...) asparagine glycans are attached at residues N6 and N13. Disulfide bonds link C17–C270 and C97–C175. Residues 28 to 50 traverse the membrane as a helical segment; sequence FPLLYTVLFFVGLITNSLAMRIF. Topologically, residues 51 to 61 are cytoplasmic; the sequence is FQIRSKSNFII. S55 and S57 each carry phosphoserine. Residues 62–82 traverse the membrane as a helical segment; sequence FLKNTVISDLLMILTFPFKIL. Residues 83–97 are Extracellular-facing; sequence SDAKLGAGPLRTFVC. Positions 93, 97, and 105 each coordinate ADP. A helical membrane pass occupies residues 98–118; that stretch reads QVTSVIFYFTMYISISFLGLI. Over 119–142 the chain is Cytoplasmic; the sequence is TIDRYQKTTRPFKTSNPKNLLGAK. Residues 143–162 form a helical membrane-spanning segment; that stretch reads ILSVLIWAFMFLLSLPNMIL. Residues 156–159, 175–179, H187, and N191 contribute to the ADP site; these read SLPN and CSFLK. The Extracellular segment spans residues 163 to 185; it reads TNRRPRDKNVKKCSFLKSEFGLV. The helical transmembrane segment at 186 to 207 threads the bilayer; it reads WHEIVNYICQVIFWINFLIVIV. Residues 208-233 are Cytoplasmic-facing; it reads CYTLITKELYRSYVRTRGVGKVPRKK. A helical transmembrane segment spans residues 234–259; sequence VNVKVFIIIAVFFICFVPFHFARIPY. ADP contacts are provided by residues 256–259, Q263, and K280; that span reads RIPY. At 260–278 the chain is on the extracellular side; it reads TLSQTRDVFDCAAENTLFY. The chain crosses the membrane as a helical span at residues 279–298; that stretch reads VKESTLWLTSLNACLDPFIY. The Cytoplasmic portion of the chain corresponds to 299–342; sequence FFLCKSFRNSLISMLKCPNSATSQSQDNRKKEQDGGDPNEETPM. Positions 317 to 342 are disordered; it reads NSATSQSQDNRKKEQDGGDPNEETPM. Residues 333 to 342 are compositionally biased toward acidic residues; it reads GGDPNEETPM.

It belongs to the G-protein coupled receptor 1 family.

Its subcellular location is the cell membrane. In terms of biological role, receptor for ADP and ATP coupled to G-proteins that inhibit the adenylyl cyclase second messenger system. Required for normal platelet aggregation and blood coagulation. The polypeptide is P2Y purinoceptor 12 (P2RY12) (Macaca fascicularis (Crab-eating macaque)).